Here is a 305-residue protein sequence, read N- to C-terminus: Olfactory receptor 4F5 (305 aa).

Residues 1 to 18 (MVTEFIFLGLSDSQELQT) lie on the Extracellular side of the membrane. Residues 19 to 42 (FLFMLFFVFYGGIVFGNLLIVITV) traverse the membrane as a helical segment. The Cytoplasmic portion of the chain corresponds to 43-50 (VSDSHLHS). A helical membrane pass occupies residues 51–72 (PMYFLLANLSLIDLSLSSVTAP). Residues 73–93 (KMITDFFSQRKVISFKGCLVQ) lie on the Extracellular side of the membrane. Cysteines 90 and 182 form a disulfide. A helical transmembrane segment spans residues 94-113 (IFLLHFFGGSEMVILIAMGF). The Cytoplasmic portion of the chain corresponds to 114 to 132 (DRYIAICKPLHYTTIMCGN). Residues 133-151 (ACVGIMAVTWGIGFLHSVS) traverse the membrane as a helical segment. The Extracellular portion of the chain corresponds to 152–188 (QLAFAVHLLFCGPNEVDSFYCDLPRVIKLACTDTYRL). A helical membrane pass occupies residues 189 to 212 (DIMVIANSGVLTVCSFVLLIISYT). Residues 213–228 (IILMTIQHRPLDKSSK) are Cytoplasmic-facing. A helical membrane pass occupies residues 229-251 (ALSTLTAHITVVLLFFGPCVFIY). Topologically, residues 252-262 (AWPFPIKSLDK) are extracellular. A helical membrane pass occupies residues 263–282 (FLAVFYSVITPLLNPIIYTL). The Cytoplasmic segment spans residues 283–305 (RNKDMKTAIRQLRKWDAHSSVKF).

Belongs to the G-protein coupled receptor 1 family.

It is found in the cell membrane. Its function is as follows. Odorant receptor. This chain is Olfactory receptor 4F5 (OR4F5), found in Homo sapiens (Human).